Reading from the N-terminus, the 114-residue chain is MLFKQLILVATALTTLAVATPAVMRRTEPASSCSTGPVNCCNSSGTAKDGNIAKELALLGIVVPDINALIGVSCSPITVIGAGGASCSSQTLCCEDNKYNGIVALGCIPVDISL.

A signal peptide spans 1 to 19; the sequence is MLFKQLILVATALTTLAVA. Intrachain disulfides connect Cys33–Cys93, Cys40–Cys87, Cys41–Cys74, and Cys94–Cys107. Asn42 carries N-linked (GlcNAc...) asparagine glycosylation.

The protein belongs to the fungal hydrophobin family. As to quaternary structure, self-assembles to form functional amyloid fibrils called rodlets. Self-assembly into fibrillar rodlets occurs spontaneously at hydrophobic:hydrophilic interfaces and the rodlets further associate laterally to form amphipathic monolayers.

It is found in the secreted. The protein resides in the cell wall. Its function is as follows. Aerial growth, conidiation, and dispersal of filamentous fungi in the environment rely upon a capability of their secreting small amphipathic proteins called hydrophobins (HPBs) with low sequence identity. Class I can self-assemble into an outermost layer of rodlet bundles on aerial cell surfaces, conferring cellular hydrophobicity that supports fungal growth, development and dispersal; whereas Class II form highly ordered films at water-air interfaces through intermolecular interactions but contribute nothing to the rodlet structure. The sequence is that of Class I hydrophobin 6 from Pleurotus ostreatus (strain PC15) (Oyster mushroom).